The sequence spans 1172 residues: Putative cadmium/zinc-transporting ATPase HMA4 (1172 aa).

Residues 1–93 (MALQNKEEEK…VRVNGETSFK (93 aa)) lie on the Cytoplasmic side of the membrane. Residues 17–83 (QKSYFDVLGI…ALNEARLEAN (67 aa)) form the HMA domain. Residues 94-115 (NKWPSPFAVVSGLLLLLSFLKF) traverse the membrane as a helical segment. Over 116–118 (VYS) the chain is Extracellular. The chain crosses the membrane as a helical span at residues 119–138 (PLRWLAVAAVAAGIYPILAK). The Cytoplasmic segment spans residues 139 to 145 (AFASIKR). The chain crosses the membrane as a helical span at residues 146 to 166 (PRIDINILVIITVIATLAMQD). Residue phenylalanine 167 is a topological domain, extracellular. Residues 168 to 188 (MEAAAVVFLFTISDWLETRAS) traverse the membrane as a helical segment. Residues 189-314 (YKATSVMQSL…KTKSQRLIDK (126 aa)) are Cytoplasmic-facing. A helical transmembrane segment spans residues 315–337 (CSQYYTPAIILVSACVAIVPVIM). Residues 338-345 (KVHNLKHW) are Extracellular-facing. A helical membrane pass occupies residues 346–363 (FHLALVVLVSGCPCGLIL). Residues 364–656 (STPVATFCAL…KLARRARRKV (293 aa)) are Cytoplasmic-facing. The active-site 4-aspartylphosphate intermediate is aspartate 401. Positions 601 and 605 each coordinate Mg(2+). Residues 657–676 (VENVCLSIILKAGILALAFA) traverse the membrane as a helical segment. Residues 677 to 680 (GHPL) lie on the Extracellular side of the membrane. Residues 681 to 700 (IWAAVLVDVGTCLLVIFNSM) form a helical membrane-spanning segment. At 701 to 1172 (LLLREKKKIG…HHHHHHHVSA (472 aa)) the chain is on the cytoplasmic side.

Belongs to the cation transport ATPase (P-type) (TC 3.A.3) family. Type IB subfamily.

The protein resides in the membrane. The catalysed reaction is Zn(2+)(in) + ATP + H2O = Zn(2+)(out) + ADP + phosphate + H(+). It carries out the reaction Cd(2+)(in) + ATP + H2O = Cd(2+)(out) + ADP + phosphate + H(+). Involved in cadmium/zinc transport. The polypeptide is Putative cadmium/zinc-transporting ATPase HMA4 (HMA4) (Arabidopsis thaliana (Mouse-ear cress)).